The primary structure comprises 1386 residues: Putative ATP-dependent RNA helicase DHX57 (1386 aa).

The segment covering 1–11 has biased composition (basic residues); the sequence is MSSSVRRKGKP. 2 disordered regions span residues 1–106 and 120–147; these read MSSS…MTSE and EQDA…NDER. Composition is skewed to gly residues over residues 12–23 and 35–50; these read GKGGGKGSSRGG and GSGG…GGGN. A coiled-coil region spans residues 101-125; that stretch reads LHMTSENQEKVKALLRDLQEQDADA. A phosphoserine mark is found at Ser127 and Ser132. A compositionally biased stretch (acidic residues) spans 133–143; sequence GEEEDDEPDCC. The UBA domain maps to 180–220; it reads TVSPFAVQKLSRYGFNTERCQAVLRMCDGDVGASLEHLLTQ. The segment at 299–326 adopts a C3H1-type zinc-finger fold; the sequence is ENSLEICKFYLKGNCKFGSKCRFKHEVP. A phosphoserine mark is found at Ser475, Ser477, and Ser480. One can recognise a Helicase ATP-binding domain in the interval 554 to 721; that stretch reads LNLLRKHQVV…FNSCPVITIP (168 aa). ATP is bound at residue 567–574; it reads GMTGCGKT. A DEVH box motif is present at residues 668–671; sequence DEVH. One can recognise a Helicase C-terminal domain in the interval 830–1010; it reads LIEALLEWIV…QLCLRIKILE (181 aa).

This sequence belongs to the DEAD box helicase family. DEAH subfamily.

It catalyses the reaction ATP + H2O = ADP + phosphate + H(+). In terms of biological role, probable ATP-binding RNA helicase. The protein is Putative ATP-dependent RNA helicase DHX57 (DHX57) of Homo sapiens (Human).